Consider the following 419-residue polypeptide: Gamma-glutamyl phosphate reductase (419 aa).

The protein belongs to the gamma-glutamyl phosphate reductase family.

The protein localises to the cytoplasm. The catalysed reaction is L-glutamate 5-semialdehyde + phosphate + NADP(+) = L-glutamyl 5-phosphate + NADPH + H(+). It participates in amino-acid biosynthesis; L-proline biosynthesis; L-glutamate 5-semialdehyde from L-glutamate: step 2/2. Catalyzes the NADPH-dependent reduction of L-glutamate 5-phosphate into L-glutamate 5-semialdehyde and phosphate. The product spontaneously undergoes cyclization to form 1-pyrroline-5-carboxylate. The sequence is that of Gamma-glutamyl phosphate reductase from Nitratidesulfovibrio vulgaris (strain DP4) (Desulfovibrio vulgaris).